The following is a 173-amino-acid chain: Protein SHI RELATED SEQUENCE 8 (173 aa).

The Zn(2+) site is built by Cys52, Cys63, Cys68, Cys72, and Cys79. Positions 52–79 form a DNA-binding region, zn(2)-C6 fungal-type; degenerate; it reads CQDFGNQAKKDCSHMRCRTCCKSRGFEC. Over residues 100–110 the composition is skewed to low complexity; it reads LATVQPQTQLP. A disordered region spans residues 100–121; sequence LATVQPQTQLPRGESVPKRHRE.

The protein belongs to the SHI protein family.

It is found in the nucleus. Functionally, transcription activator that binds DNA on 5'-ACTCTAC-3' and promotes auxin homeostasis-regulating gene expression (e.g. YUC genes), as well as genes affecting stamen development, cell expansion and timing of flowering. Synergistically with other SHI-related proteins, regulates gynoecium, stamen and leaf development in a dose-dependent manner, controlling apical-basal patterning. Promotes style and stigma formation, and influence vascular development during gynoecium development. May also have a role in the formation and/or maintenance of the shoot apical meristem (SAM). This Arabidopsis thaliana (Mouse-ear cress) protein is Protein SHI RELATED SEQUENCE 8 (SRS8).